The chain runs to 335 residues: Tyrosine-protein phosphatase 1 (335 aa).

One can recognise a Tyrosine-protein phosphatase domain in the interval 15–328 (LLGKFKFIQN…LFIYHAAKYL (314 aa)). Position 83 is a phosphoserine; by CLK1 (Ser83). Cys252 serves as the catalytic Phosphocysteine intermediate.

This sequence belongs to the protein-tyrosine phosphatase family. Non-receptor class subfamily. Post-translationally, activated by phosphorylation at Ser-83.

It is found in the cytoplasm. The enzyme catalyses O-phospho-L-tyrosyl-[protein] + H2O = L-tyrosyl-[protein] + phosphate. Functionally, is not required for vegetative growth. The protein is Tyrosine-protein phosphatase 1 (PTP1) of Saccharomyces cerevisiae (strain ATCC 204508 / S288c) (Baker's yeast).